The sequence spans 515 residues: Serine/threonine-protein phosphatase PP-Z (515 aa).

The tract at residues 1–186 (MGQGSSKHAD…SSTDPDDPET (186 aa)) is disordered. Residues 17–30 (PSFSRSDTQGSIKS) are compositionally biased toward polar residues. Position 18 is a phosphoserine (Ser-18). The segment covering 40 to 51 (KGKDSNHDRRTS) has biased composition (basic and acidic residues). The span at 63–74 (ETPPSLPPPPSP) shows a compositional bias: pro residues. Residues 91–109 (DSGNSSQSPTSPHPSNQPA) are compositionally biased toward polar residues. Residues 126–143 (SSSSYAVSPTSPTSPTSS) show a composition bias toward low complexity. The Mn(2+) site is built by Asp-248, His-250, Asp-276, and Asn-308. His-309 acts as the Proton donor in catalysis. Mn(2+) contacts are provided by His-357 and His-432. 2 positions are modified to phosphoserine: Ser-505 and Ser-514.

It belongs to the PPP phosphatase family. PP-Z subfamily. Mn(2+) is required as a cofactor.

It localises to the cytoplasm. It catalyses the reaction O-phospho-L-seryl-[protein] + H2O = L-seryl-[protein] + phosphate. It carries out the reaction O-phospho-L-threonyl-[protein] + H2O = L-threonyl-[protein] + phosphate. In Schizosaccharomyces pombe (strain 972 / ATCC 24843) (Fission yeast), this protein is Serine/threonine-protein phosphatase PP-Z (pzh1).